We begin with the raw amino-acid sequence, 348 residues long: Growth-regulating factor 5 (348 aa).

The region spanning 24–59 (VFTAAQWAELEQQALIYKYLVAGVPVPGDLLLPIRP) is the QLQ domain. 2 short sequence motifs (bipartite nuclear localization signal) span residues 94-112 (KKLD…KKWR) and 130-137 (RGRNRSRK). A WRC domain is found at 97–141 (DPEPWRCRRTDGKKWRCSKEAHPDSKYCERHMHRGRNRSRKPVES). 2 disordered regions span residues 125 to 165 (ERHM…HDTD) and 306 to 348 (LRPF…PRCD). Residues 127-136 (HMHRGRNRSR) show a composition bias toward basic residues. The span at 148–161 (PQSQPQLSNVTTAT) shows a compositional bias: polar residues. The segment covering 306–320 (LRPFFDEWPGRRDSW) has biased composition (basic and acidic residues). Residues 329–340 (NQTSFSTTQLSI) are compositionally biased toward polar residues.

Belongs to the GRF family.

It localises to the nucleus. Its function is as follows. Transcription activator that plays a regulatory role in gibberellin-induced stem elongation. This chain is Growth-regulating factor 5 (GRF5), found in Oryza sativa subsp. japonica (Rice).